Here is a 581-residue protein sequence, read N- to C-terminus: NADH-quinone oxidoreductase subunit C/D (581 aa).

Residues 1–172 form an NADH dehydrogenase I subunit C region; it reads MSASELVTEL…PLFNMTASLF (172 aa). Residues 196–581 form an NADH dehydrogenase I subunit D region; the sequence is ELMILNYGPH…IDYVMSDVDR (386 aa).

The protein in the N-terminal section; belongs to the complex I 30 kDa subunit family. This sequence in the C-terminal section; belongs to the complex I 49 kDa subunit family. NDH-1 is composed of 13 different subunits. Subunits NuoB, CD, E, F, and G constitute the peripheral sector of the complex.

Its subcellular location is the cell inner membrane. The catalysed reaction is a quinone + NADH + 5 H(+)(in) = a quinol + NAD(+) + 4 H(+)(out). Its function is as follows. NDH-1 shuttles electrons from NADH, via FMN and iron-sulfur (Fe-S) centers, to quinones in the respiratory chain. The immediate electron acceptor for the enzyme in this species is believed to be ubiquinone. Couples the redox reaction to proton translocation (for every two electrons transferred, four hydrogen ions are translocated across the cytoplasmic membrane), and thus conserves the redox energy in a proton gradient. The chain is NADH-quinone oxidoreductase subunit C/D from Rhodopseudomonas palustris (strain TIE-1).